Reading from the N-terminus, the 426-residue chain is D-tagatose-1,6-bisphosphate aldolase subunit KbaZ (426 aa).

It belongs to the GatZ/KbaZ family. KbaZ subfamily. Forms a complex with KbaY.

Its pathway is carbohydrate metabolism; D-tagatose 6-phosphate degradation; D-glyceraldehyde 3-phosphate and glycerone phosphate from D-tagatose 6-phosphate: step 2/2. In terms of biological role, component of the tagatose-1,6-bisphosphate aldolase KbaYZ that is required for full activity and stability of the Y subunit. Could have a chaperone-like function for the proper and stable folding of KbaY. When expressed alone, KbaZ does not show any aldolase activity. The protein is D-tagatose-1,6-bisphosphate aldolase subunit KbaZ of Escherichia coli O157:H7.